Here is a 349-residue protein sequence, read N- to C-terminus: N-acetyltaurine hydrolase (349 aa).

The a divalent metal cation site is built by His26, His28, Glu169, His201, His230, and Asp298.

This sequence belongs to the metallo-dependent hydrolases superfamily. Phosphotriesterase family. It depends on a divalent metal cation as a cofactor.

The protein resides in the cytoplasm. Its subcellular location is the cytosol. The enzyme catalyses N-acetyltaurine + H2O = taurine + acetate. It carries out the reaction N-propanoyltaurine + H2O = propanoate + taurine. The catalysed reaction is N-acetyl-L-methionine + H2O = L-methionine + acetate. It catalyses the reaction N-acetyl-L-isoleucine + H2O = L-isoleucine + acetate. The enzyme catalyses N-acetyl-L-leucine + H2O = L-leucine + acetate. It carries out the reaction N-acetyl-L-valine + H2O = L-valine + acetate. In terms of biological role, N-acetyltaurine hydrolase that regulates feeding by catalyzing the hydrolysis of N-acetyltaurine into taurine and acetate. N-acetyltaurine has anorexigenic and anti-obesity effects that are dependent on GFRAL receptor and GDF15. PTER also acts on other N-acetyl amino acids (Met, Ile, Leu, Val) and N-propionyltaurine, but at lower rates. The chain is N-acetyltaurine hydrolase from Homo sapiens (Human).